The primary structure comprises 230 residues: Probable dual specificity protein phosphatase DDB_G0283417 (230 aa).

A Tyrosine-protein phosphatase domain is found at 78–230; sequence NNNYESINLY…LEIFEKELLF (153 aa). The active-site Phosphocysteine intermediate is the C174.

Belongs to the protein-tyrosine phosphatase family. Non-receptor class dual specificity subfamily.

It carries out the reaction O-phospho-L-tyrosyl-[protein] + H2O = L-tyrosyl-[protein] + phosphate. It catalyses the reaction O-phospho-L-seryl-[protein] + H2O = L-seryl-[protein] + phosphate. The catalysed reaction is O-phospho-L-threonyl-[protein] + H2O = L-threonyl-[protein] + phosphate. In terms of biological role, has a dual specificity toward Ser/Thr and Tyr-containing proteins. This is Probable dual specificity protein phosphatase DDB_G0283417 from Dictyostelium discoideum (Social amoeba).